Consider the following 241-residue polypeptide: Fatty acid metabolism regulator protein (241 aa).

The HTH gntR-type domain occupies 11–79 (QSPAALAEEY…HGKPTKVNNI (69 aa)). The H-T-H motif DNA-binding region spans 39 to 58 (ERDLADKIGVTRTTLREVLQ).

Homodimer.

Its subcellular location is the cytoplasm. In terms of biological role, multifunctional regulator of fatty acid metabolism. The protein is Fatty acid metabolism regulator protein of Haemophilus influenzae (strain ATCC 51907 / DSM 11121 / KW20 / Rd).